Here is a 329-residue protein sequence, read N- to C-terminus: GTP 3',8-cyclase (329 aa).

A Radical SAM core domain is found at 8–234 (AFARKFYYLR…QLRSRADGPA (227 aa)). GTP is bound at residue R17. Positions 24 and 28 each coordinate [4Fe-4S] cluster. Residue Y30 coordinates S-adenosyl-L-methionine. C31 is a [4Fe-4S] cluster binding site. R68 serves as a coordination point for GTP. G72 contributes to the S-adenosyl-L-methionine binding site. T99 provides a ligand contact to GTP. S123 contributes to the S-adenosyl-L-methionine binding site. K160 provides a ligand contact to GTP. Residue M194 participates in S-adenosyl-L-methionine binding. [4Fe-4S] cluster-binding residues include C257 and C260. GTP is bound at residue 262 to 264 (RLR). Residue C274 participates in [4Fe-4S] cluster binding.

It belongs to the radical SAM superfamily. MoaA family. In terms of assembly, monomer and homodimer. [4Fe-4S] cluster serves as cofactor.

The catalysed reaction is GTP + AH2 + S-adenosyl-L-methionine = (8S)-3',8-cyclo-7,8-dihydroguanosine 5'-triphosphate + 5'-deoxyadenosine + L-methionine + A + H(+). The protein operates within cofactor biosynthesis; molybdopterin biosynthesis. In terms of biological role, catalyzes the cyclization of GTP to (8S)-3',8-cyclo-7,8-dihydroguanosine 5'-triphosphate. This is GTP 3',8-cyclase from Cronobacter sakazakii (strain ATCC BAA-894) (Enterobacter sakazakii).